Here is a 132-residue protein sequence, read N- to C-terminus: Large ribosomal subunit protein uL22 (132 aa).

The protein belongs to the universal ribosomal protein uL22 family. In terms of assembly, part of the 50S ribosomal subunit.

This protein binds specifically to 23S rRNA; its binding is stimulated by other ribosomal proteins, e.g. L4, L17, and L20. It is important during the early stages of 50S assembly. It makes multiple contacts with different domains of the 23S rRNA in the assembled 50S subunit and ribosome. Its function is as follows. The globular domain of the protein is located near the polypeptide exit tunnel on the outside of the subunit, while an extended beta-hairpin is found that lines the wall of the exit tunnel in the center of the 70S ribosome. This Pelagibacter ubique (strain HTCC1062) protein is Large ribosomal subunit protein uL22.